We begin with the raw amino-acid sequence, 233 residues long: Isoprenyl transferase (233 aa).

Aspartate 12 is an active-site residue. Aspartate 12 serves as a coordination point for Mg(2+). Substrate is bound by residues 13–16, tryptophan 17, arginine 25, histidine 29, and 57–59; these read GNGR and STE. Asparagine 60 functions as the Proton acceptor in the catalytic mechanism. Residues tryptophan 61, arginine 63, arginine 178, and 184-186 contribute to the substrate site; that span reads RLS. Glutamate 197 serves as a coordination point for Mg(2+).

Belongs to the UPP synthase family. As to quaternary structure, homodimer. Mg(2+) serves as cofactor.

Functionally, catalyzes the condensation of isopentenyl diphosphate (IPP) with allylic pyrophosphates generating different type of terpenoids. The sequence is that of Isoprenyl transferase from Thermotoga maritima (strain ATCC 43589 / DSM 3109 / JCM 10099 / NBRC 100826 / MSB8).